The primary structure comprises 461 residues: MPSVAIAGAGLVGALNACFFAQKGWDVSVYEFRKDIRTMKHVQGRSINLALSQRGKSALEAVGLKEYIVNQGVPLYARLIHNKDGKTYSRQPYGKPGEHIVSINRRHLNEVMITQAEKSPNVKFFFEHKVKNVDYDKKQLVVQCTSQPSKIPTFGNKSPPQEHAEFHVEADLILACDGAYSAVRRSLMTIPRFDFSQEYIEHGYVELNIMANNNEFAFEENVFHLWPRGHFTLIALANRDKTFTVTIFAPFSEFEKHMSTSEDVLSFFEENFPDAFLLLGKEHIADTFNRVKPQPLVSIKCSPHSFFDNLVLMGDAAHAMVPFYGQGMNCGFEDCLVFSETLEEYGNDIAKAVKVYSDGRVNDAHSINDLAMYNYEELKDLVNKSSYKLRKKFDTIMNSIFPKSWIPLYSMVTFSRIPYSEVIERRKRQDKILSRIMTTTSTLALIGAAAGIYVNRGKLGL.

Transmembrane regions (helical) follow at residues 395–415 and 432–452; these read TIMN…VTFS and ILSR…AAGI.

Belongs to the aromatic-ring hydroxylase family. KMO subfamily. FAD serves as cofactor.

Its subcellular location is the mitochondrion. The protein resides in the membrane. The catalysed reaction is L-kynurenine + NADPH + O2 + H(+) = 3-hydroxy-L-kynurenine + NADP(+) + H2O. Its pathway is cofactor biosynthesis; NAD(+) biosynthesis; quinolinate from L-kynurenine: step 1/3. In terms of biological role, catalyzes the hydroxylation of L-kynurenine (L-Kyn) to form 3-hydroxy-L-kynurenine (L-3OHKyn). Required for synthesis of quinolinic acid. The chain is Kynurenine 3-monooxygenase from Caenorhabditis elegans.